The following is a 427-amino-acid chain: Protein TIFY 6a (427 aa).

The span at 1–25 shows a compositional bias: basic and acidic residues; sequence MERDFLGAIGRKEEAAGKPEEHSDY. Residues 1 to 33 are disordered; that stretch reads MERDFLGAIGRKEEAAGKPEEHSDYRGGGGGAS. Residues 196-231 form the Tify domain; it reads QNPKVTQMTIFYDGLVNVFDNIPVEKAQELMLLASR. Composition is skewed to polar residues over residues 293–303 and 317–327; these read LPKSSSSSNDS and PLSQASPSQPI. A disordered region spans residues 293–327; that stretch reads LPKSSSSSNDSAGPKSGGLPLAVTPLSQASPSQPI. The short motif at 343 to 367 is the Jas element; that stretch reads PQARKASLARFLEKRKERVSSVAPY. The Nuclear localization signal signature appears at 345-352; sequence ARKASLAR. A disordered region spans residues 360 to 427; sequence RVSSVAPYPS…QEPPSTKLQI (68 aa). 2 stretches are compositionally biased toward polar residues: residues 369–402 and 411–427; these read SSKS…NNCE and RNIS…KLQI.

This sequence belongs to the TIFY/JAZ family. Ubiquitinated.

The protein localises to the nucleus. Its function is as follows. Repressor of jasmonate responses. In Oryza sativa subsp. indica (Rice), this protein is Protein TIFY 6a.